A 162-amino-acid polypeptide reads, in one-letter code: Globin CTT-VI (162 aa).

The N-terminal stretch at 1 to 15 is a signal peptide; the sequence is MKFLVLALCIAAASA. The Globin domain maps to 17–161; it reads VLTTEQADLV…TYAMLFSAMD (145 aa). Residues His-75 and His-110 each contribute to the heme b site.

This sequence belongs to the globin family. In terms of assembly, homodimer.

The sequence is that of Globin CTT-VI (CTT-6) from Chironomus thummi thummi (Midge).